The primary structure comprises 728 residues: MSYKYIFLLSAFTLGVPPGIYCQGRNEVVVDYNTRRFLSGVSELDRSKYFNIHSTSDDDKDVGKFLADYQVGLGRKFWGPYSYAYNKTHEVGKYPQMKPYSGNISVKRYIATEHPYVQHIQGGIDVQAAGAWSAEYYSNSELVPEFFEPLNEPFVHANDAGFTVQGQAMRELMVDFYASIGKHIHNNPRLNGKMKVIGYAAAYPAWEDGNFNYWNTRMKMFIDRAGAYMDGFSVHLYDGINVTGTDTKRSGSNSEAVLDMVEAYSYIKFGHVKPLAISEFGGIDNSKPDDSYDDISSVRSVSSFNHFLFNLMERQDNLFISIPFVSDKAEWHITAANNYTSYSAALFIPDNPQNLKNTTWRLNDKKYFFELWKNVKGERVDITSSNPDIQVQAFKDGGRLYIALDNLDDNPQTVYLNNKNSWKDVSNVTKRSLYVNYNAGIEYTEQNVPSMPESISIVPNQTIVLVADVSSSAFTNSIIRNKYYSSEYLKPISAGSSLSFPFTGIESGSGRASLRMSIGRPVSASKKPVVKINGTAVSVPDNWKGYGQSNRNIFFGMIEVPFDIQLLKNGDNNVDITFSDGGGHVSSMILQVEKYTVSTLQNGTFSEGLSAWQPLGNYGTVCVQTDNAGNNVACISGHAGLMQRVDMESGRTYRFSADVKTEGACKLKVMLQDMSTGTVYTEEFSSPGNYKAVSFDFNSTVKKVVCAIVCERQNDAAWIDNIVLLPQN.

A signal peptide spans 1-22 (MSYKYIFLLSAFTLGVPPGIYC). Substrate is bound by residues histidine 53, lysine 76, tryptophan 78, lysine 87, histidine 114, and asparagine 151. Catalysis depends on glutamate 152, which acts as the Proton donor. Substrate-binding residues include histidine 235, glutamate 279, serine 326, and tryptophan 331. Glutamate 279 functions as the Nucleophile in the catalytic mechanism. Residues 599–701 (TLQNGTFSEG…AVSFDFNSTV (103 aa)) form the CBM-cenC domain.

Belongs to the glycosyl hydrolase 86 family.

The enzyme catalyses Hydrolysis of beta-D-galactopyranose-(1-&gt;4)-alpha-L-galactopyranose-6-sulfate linkages in porphyran.. Its function is as follows. Cleaves the sulfated polysaccharide porphyran at the (1-&gt;4) linkages between beta-D-galactopyranose and alpha-L-galactopyranose-6-sulfate, forming mostly the disaccharide alpha-L-galactopyranose-6-sulfate-(1-&gt;3)-beta-D-galactose. Some longer oligosaccharides of even number of residues are also observed. Inactive on the non-sulfated agarose portion of the porphyran backbone. Can also use methylated galactoses. This Phocaeicola plebeius (strain DSM 17135 / JCM 12973 / CCUG 54634 / M2) (Bacteroides plebeius) protein is Beta-porphyranase A.